The primary structure comprises 148 residues: Lysozyme-like protein 1 (148 aa).

The signal sequence occupies residues 1–19; that stretch reads MKSVGVFALIISFSIVAES. In terms of domain architecture, C-type lysozyme spans 20–148; that stretch reads KIYTRCKLAK…SEWKRGCEVS (129 aa). Disulfide bonds link Cys25–Cys145, Cys49–Cys133, Cys83–Cys98, and Cys94–Cys112. Glu54 is an active-site residue. Asn58 carries an N-linked (GlcNAc...) asparagine glycan. Residue Asp71 is part of the active site.

Belongs to the glycosyl hydrolase 22 family. In terms of assembly, monomer.

Its subcellular location is the secreted. It carries out the reaction Hydrolysis of (1-&gt;4)-beta-linkages between N-acetylmuramic acid and N-acetyl-D-glucosamine residues in a peptidoglycan and between N-acetyl-D-glucosamine residues in chitodextrins.. The sequence is that of Lysozyme-like protein 1 (Lyzl1) from Mus musculus (Mouse).